Consider the following 615-residue polypeptide: Envelope glycoprotein (615 aa).

A signal peptide spans 1–84 (MPKRRAGFRK…VQNGAAAAFW (84 aa)). Topologically, residues 85–378 (AYIPDPPMIQ…INTALSRPKR (294 aa)) are extracellular. 6 N-linked (GlcNAc...) asparagine; by host glycosylation sites follow: Asn108, Asn127, Asn178, Asn219, Asn275, and Asn319. A helical membrane pass occupies residues 379–402 (GLSLIILGIVSLITLIATAVTACV). Over 403–615 (SLAQSIQAAH…KERGAAGDDP (213 aa)) the chain is Cytoplasmic. Coiled-coil stretches lie at residues 411-461 (AHTV…FRMK) and 495-531 (IWFNTNLSLDLLQLHNEILDIENSPKATLNIADTVDN). Residues 590–593 (YRTM) form a required for cell transformation region.

As to quaternary structure, interacts with sheep HYAL2 receptor.

It is found in the virion membrane. Its function is as follows. The envelope proteins induce cell transformation leading to ovine pulmonary adenocarcinoma (OPA), a contagious lung cancer of sheep and goat. They bind to the HYAL2 receptor for cell entry. Env proteins probably do not act as oncogenes by themselves, but may rather liberate an oncogenic factor that would normally be negatively regulated. One mechanism of transformation seems to involve activation of the phosphoinositide-3-OH kinase (PI3K)/Akt pathway but does not involve the virus receptor HYAL2, and the other seems to involve Env binding to HYAL2, HYAL2 degradation, and activation of the MST1R receptor tyrosine kinase, which is normally suppressed by HYAL2. The polypeptide is Envelope glycoprotein (env) (Ovis aries (Sheep)).